The primary structure comprises 147 residues: METLTAISRWLAKQHVVTWCVQQEGELWCANAFYLFDAQKVAFYILTEEKTRHAQMSGPQAAVAGTVNGQPKTVALIRGVQFKGEIRRLEGEESDLARKAYNRRFPVARMLSAPVWEIRLDEIKFTDNTLGFGKKMIWLRNSGTEQA.

This sequence belongs to the UPF0306 family.

The sequence is that of UPF0306 protein YhbP from Escherichia coli O17:K52:H18 (strain UMN026 / ExPEC).